Here is a 455-residue protein sequence, read N- to C-terminus: MRKIPNHGTLRMTKVAYPLGLCVGLFIYVAYIKWHRASAAQAFFTIAGAASGARWTQQAFSSPGSAARGHEVFYGIMFDAGSTGTRIHVFQFARPPGETPTLTHETFKALKPGLSAYADDVEKSAQGIQELLNVAKQHIPYDFWKATPLVLKATAGLRLLPGEKAQKLLQKVKEVFKASPFLVGDDCVSIMNGTDEGVSAWITVNFLTGSLKTPGSSSVGMLDLGGGSTQITFLPRVEGTLQASPPGHLTALQMFNRTYKLYSYSYLGLGLMSARLAILGGVEGKPAENDKELVSPCLSPRFRGEWEHAEVTYRISGQKAVGLYELCASRVSEVLRNKVHRTEEAQHVDFYAFSYYYDLAASFGLIDAEKGGSLVVGDFEIAAKYVCRTLETQPPSSPFACMDLTYISLLLHEFGFPGDKVLKLARKIDNVETSWALGAIFHYIDSLKRQKVPAL.

The Cytoplasmic segment spans residues 1 to 12; that stretch reads MRKIPNHGTLRM. Residues 13-32 form a helical membrane-spanning segment; it reads TKVAYPLGLCVGLFIYVAYI. Residues 33-455 lie on the Lumenal side of the membrane; sequence KWHRASAAQA…SLKRQKVPAL (423 aa). The Proton acceptor role is filled by glutamate 196. Intrachain disulfides connect cysteine 297–cysteine 327 and cysteine 387–cysteine 401.

This sequence belongs to the GDA1/CD39 NTPase family. The cofactor is Mg(2+). It depends on Ca(2+) as a cofactor. N-glycosylated.

The protein localises to the golgi apparatus membrane. The protein resides in the secreted. Its subcellular location is the cell membrane. The catalysed reaction is a ribonucleoside 5'-diphosphate + H2O = a ribonucleoside 5'-phosphate + phosphate + H(+). It catalyses the reaction IDP + H2O = IMP + phosphate + H(+). It carries out the reaction GDP + H2O = GMP + phosphate + H(+). The enzyme catalyses UDP + H2O = UMP + phosphate + H(+). Its function is as follows. Catalyzes the hydrolysis of nucleoside triphosphates and diphosphates in a calcium- or magnesium-dependent manner. Has a strong preference for nucleoside diphosphates, preferentially hydrolyzes GDP, IDP, and UDP, with slower hydrolysis of CDP, ITP, GTP, CTP, ADP, and UTP and virtually no hydrolysis of ATP. The membrane bound form might support glycosylation reactions in the Golgi apparatus and, when released from cells, might catalyze the hydrolysis of extracellular nucleotides. The chain is Ectonucleoside triphosphate diphosphohydrolase 6 from Mus musculus (Mouse).